Consider the following 313-residue polypeptide: Olfactory receptor 1M1 (313 aa).

The Extracellular portion of the chain corresponds to M1–P25. N5 carries an N-linked (GlcNAc...) asparagine glycan. The helical transmembrane segment at V26 to I46 threads the bilayer. Residues L47–H54 lie on the Cytoplasmic side of the membrane. Residues L55 to T75 traverse the membrane as a helical segment. At N76–C97 the chain is on the extracellular side. N89 carries an N-linked (GlcNAc...) asparagine glycan. A disulfide bridge connects residues C97 and C179. The chain crosses the membrane as a helical span at residues L98–M118. Residues A119 to G142 lie on the Cytoplasmic side of the membrane. Residues L143–M163 form a helical membrane-spanning segment. The Extracellular portion of the chain corresponds to A164–K196. The chain crosses the membrane as a helical span at residues I197–S217. The Cytoplasmic segment spans residues Y218–H244. A helical transmembrane segment spans residues L245–V265. The Extracellular portion of the chain corresponds to R266–S274. Residues A275 to L292 traverse the membrane as a helical segment. The Cytoplasmic portion of the chain corresponds to R293–S313.

The protein belongs to the G-protein coupled receptor 1 family. In terms of tissue distribution, expressed in testis.

It localises to the cell membrane. Odorant receptor. The protein is Olfactory receptor 1M1 of Mus musculus (Mouse).